The chain runs to 430 residues: Ethylene-responsive transcription factor WRI1 (430 aa).

Low complexity predominate over residues 1 to 26; sequence MKKRLTTSTCSSSPSSSVSSSTTTSS. Positions 1 to 66 are disordered; that stretch reads MKKRLTTSTC…PASTRRSSIY (66 aa). Over residues 53 to 63 the composition is skewed to polar residues; it reads NPTSPASTRRS. Residues 65-131 constitute a DNA-binding region (AP2/ERF 1); the sequence is IYRGVTRHRW…WGPDTILNFP (67 aa). Thr-70 bears the Phosphothreonine; by KIN10 mark. Position 166 is a phosphoserine; by KIN10 (Ser-166). The segment at residues 167–225 is a DNA-binding region (AP2/ERF 2); the sequence is KYRGVARHHHNGRWEARIGRVFGNKYLYLGTYNTQEEAAAAYDMAAIEYRGANAVTNFD. The span at 260-274 shows a compositional bias: basic and acidic residues; that stretch reads VETREAKEEPREEVK. Disordered regions lie at residues 260–297 and 398–422; these read VETREAKEEPREEVKQQYVEEPPQEEEEKEEEKAEQQE and SPPSSSSPLSCLSTDSASSTTTTTT.

It belongs to the AP2/ERF transcription factor family. AP2 subfamily. Interacts with KIN10 and KIN11. Post-translationally, ubiquitinated. The phosphorylation at Thr-70 and Ser-166 by KIN10 facilitates its degradation via the proteasomal pathway. Mostly expressed in siliques, especially in seeds. Also detected in roots and flowers, and, to a lower extent, in leaves stems and seedlings.

It is found in the nucleus. Down-regulated by KIN10 that controls its protein stability under a phosphorylation-dependent manner. In terms of biological role, may be involved in the regulation of gene expression by stress factors and by components of stress signal transduction pathways. Transcriptional activator involved in the activation of a subset of sugar-responsive genes and the control of carbon flow from sucrose import to oil accumulation in developing seeds. Binds to the GCC-box pathogenesis-related promoter element. Promotes sugar uptake and seed oil accumulation by glycolysis. Required for embryo development, seed germination and, indirectly, for seedling establishment. Negative regulator of the ABA-mediated germination inhibition. This chain is Ethylene-responsive transcription factor WRI1 (WRI1), found in Arabidopsis thaliana (Mouse-ear cress).